The chain runs to 346 residues: Formimidoylglutamase (346 aa).

Mn(2+)-binding residues include H145, D180, H182, D184, D271, and D273.

The protein belongs to the arginase family. The cofactor is Mn(2+).

The catalysed reaction is N-formimidoyl-L-glutamate + H2O = formamide + L-glutamate. The protein operates within amino-acid degradation; L-histidine degradation into L-glutamate; L-glutamate from N-formimidoyl-L-glutamate (hydrolase route): step 1/1. Functionally, catalyzes the conversion of N-formimidoyl-L-glutamate to L-glutamate and formamide. This Psychrobacter cryohalolentis (strain ATCC BAA-1226 / DSM 17306 / VKM B-2378 / K5) protein is Formimidoylglutamase.